Reading from the N-terminus, the 155-residue chain is uncharacterized protein (155 aa).

The interval 1-34 is disordered; it reads MESLQTPQHRENQDKREKEYGVKHMPMGNNAGNL. Basic and acidic residues predominate over residues 8–22; it reads QHRENQDKREKEYGV. The chain crosses the membrane as a helical span at residues 115-135; it reads MSLLLLPAFSGLTWAPFLFLF.

The protein resides in the membrane. This is an uncharacterized protein from Homo sapiens (Human).